The chain runs to 334 residues: Tryptophan--tRNA ligase (334 aa).

ATP-binding positions include Q11–S13 and G19–N20. Residues P12–N20 carry the 'HIGH' region motif. D135 provides a ligand contact to L-tryptophan. ATP is bound by residues G147–D149, V186, and K195–S199. Residues K195–S199 carry the 'KMSKS' region motif.

Belongs to the class-I aminoacyl-tRNA synthetase family. Homodimer.

It is found in the cytoplasm. The enzyme catalyses tRNA(Trp) + L-tryptophan + ATP = L-tryptophyl-tRNA(Trp) + AMP + diphosphate + H(+). Catalyzes the attachment of tryptophan to tRNA(Trp). This chain is Tryptophan--tRNA ligase, found in Escherichia coli O157:H7.